Reading from the N-terminus, the 124-residue chain is Small ribosomal subunit protein uS12 (124 aa).

The segment at 1 to 25 is disordered; sequence MARINQLVRKPRRARAKKSDVPALE. At D89 the chain carries 3-methylthioaspartic acid. The segment at 103-124 is disordered; it reads DTAGVSGRRRGRSKYGEKKPKE.

It belongs to the universal ribosomal protein uS12 family. As to quaternary structure, part of the 30S ribosomal subunit. Contacts proteins S8 and S17. May interact with IF1 in the 30S initiation complex.

Functionally, with S4 and S5 plays an important role in translational accuracy. Its function is as follows. Interacts with and stabilizes bases of the 16S rRNA that are involved in tRNA selection in the A site and with the mRNA backbone. Located at the interface of the 30S and 50S subunits, it traverses the body of the 30S subunit contacting proteins on the other side and probably holding the rRNA structure together. The combined cluster of proteins S8, S12 and S17 appears to hold together the shoulder and platform of the 30S subunit. The protein is Small ribosomal subunit protein uS12 of Coxiella burnetii (strain Dugway 5J108-111).